The following is a 249-amino-acid chain: 5'-nucleotidase SurE (249 aa).

A divalent metal cation contacts are provided by Asp8, Asp9, Ser39, and Asn91.

It belongs to the SurE nucleotidase family. Requires a divalent metal cation as cofactor.

The protein resides in the cytoplasm. The catalysed reaction is a ribonucleoside 5'-phosphate + H2O = a ribonucleoside + phosphate. Nucleotidase that shows phosphatase activity on nucleoside 5'-monophosphates. The protein is 5'-nucleotidase SurE of Haemophilus influenzae (strain 86-028NP).